The primary structure comprises 33 residues: Sucrose-6-phosphate hydrolase (33 aa).

P15–E18 is a substrate binding site. The active site involves E18.

This sequence belongs to the glycosyl hydrolase 32 family.

The catalysed reaction is Hydrolysis of terminal non-reducing beta-D-fructofuranoside residues in beta-D-fructofuranosides.. Its pathway is glycan biosynthesis; sucrose metabolism. This Fusobacterium mortiferum protein is Sucrose-6-phosphate hydrolase.